A 492-amino-acid chain; its full sequence is Phenylalanine--tRNA ligase alpha subunit (492 aa).

L-phenylalanine-binding positions include Thr-335, 374 to 376, and Tyr-414; that span reads QLE. Residue Glu-416 coordinates Mg(2+). Phe-439 is a binding site for L-phenylalanine.

This sequence belongs to the class-II aminoacyl-tRNA synthetase family. Phe-tRNA synthetase alpha subunit type 2 subfamily. Tetramer of two alpha and two beta subunits. Requires Mg(2+) as cofactor.

It is found in the cytoplasm. It carries out the reaction tRNA(Phe) + L-phenylalanine + ATP = L-phenylalanyl-tRNA(Phe) + AMP + diphosphate + H(+). The sequence is that of Phenylalanine--tRNA ligase alpha subunit from Methanosarcina acetivorans (strain ATCC 35395 / DSM 2834 / JCM 12185 / C2A).